Consider the following 360-residue polypeptide: Phosphoserine aminotransferase (360 aa).

Position 42 (Arg-42) interacts with L-glutamate. Residues Trp-102, Thr-152, Asp-171, and Gln-194 each coordinate pyridoxal 5'-phosphate. An N6-(pyridoxal phosphate)lysine modification is found at Lys-195. 237–238 (NT) serves as a coordination point for pyridoxal 5'-phosphate.

This sequence belongs to the class-V pyridoxal-phosphate-dependent aminotransferase family. SerC subfamily. In terms of assembly, homodimer. It depends on pyridoxal 5'-phosphate as a cofactor.

It is found in the cytoplasm. The catalysed reaction is O-phospho-L-serine + 2-oxoglutarate = 3-phosphooxypyruvate + L-glutamate. It carries out the reaction 4-(phosphooxy)-L-threonine + 2-oxoglutarate = (R)-3-hydroxy-2-oxo-4-phosphooxybutanoate + L-glutamate. It functions in the pathway amino-acid biosynthesis; L-serine biosynthesis; L-serine from 3-phospho-D-glycerate: step 2/3. Its pathway is cofactor biosynthesis; pyridoxine 5'-phosphate biosynthesis; pyridoxine 5'-phosphate from D-erythrose 4-phosphate: step 3/5. Functionally, catalyzes the reversible conversion of 3-phosphohydroxypyruvate to phosphoserine and of 3-hydroxy-2-oxo-4-phosphonooxybutanoate to phosphohydroxythreonine. The protein is Phosphoserine aminotransferase of Coxiella burnetii (strain Dugway 5J108-111).